The chain runs to 361 residues: Spermidine/putrescine import ATP-binding protein PotA (361 aa).

An ABC transporter domain is found at 4 to 234; it reads LELRDVTRRF…PANRFIADFI (231 aa). 36–43 provides a ligand contact to ATP; sequence GPSGCGKT.

It belongs to the ABC transporter superfamily. Spermidine/putrescine importer (TC 3.A.1.11.1) family. In terms of assembly, the complex is composed of two ATP-binding proteins (PotA), two transmembrane proteins (PotB and PotC) and a solute-binding protein (PotD).

The protein localises to the cell inner membrane. It carries out the reaction ATP + H2O + polyamine-[polyamine-binding protein]Side 1 = ADP + phosphate + polyamineSide 2 + [polyamine-binding protein]Side 1.. Part of the ABC transporter complex PotABCD involved in spermidine/putrescine import. Responsible for energy coupling to the transport system. The protein is Spermidine/putrescine import ATP-binding protein PotA of Nitrosomonas europaea (strain ATCC 19718 / CIP 103999 / KCTC 2705 / NBRC 14298).